Here is a 122-residue protein sequence, read N- to C-terminus: Small ribosomal subunit protein uS13 (122 aa).

A disordered region spans residues 95–122 (GLPVRGQKTKTNARTRKGPKRTVANKKK).

Belongs to the universal ribosomal protein uS13 family. In terms of assembly, part of the 30S ribosomal subunit. Forms a loose heterodimer with protein S19. Forms two bridges to the 50S subunit in the 70S ribosome.

Its function is as follows. Located at the top of the head of the 30S subunit, it contacts several helices of the 16S rRNA. In the 70S ribosome it contacts the 23S rRNA (bridge B1a) and protein L5 of the 50S subunit (bridge B1b), connecting the 2 subunits; these bridges are implicated in subunit movement. Contacts the tRNAs in the A and P-sites. The protein is Small ribosomal subunit protein uS13 of Agathobacter rectalis (strain ATCC 33656 / DSM 3377 / JCM 17463 / KCTC 5835 / VPI 0990) (Eubacterium rectale).